Consider the following 240-residue polypeptide: UDP-2,3-diacylglucosamine hydrolase (240 aa).

Positions 8, 10, 41, 79, and 114 each coordinate Mn(2+). 79 to 80 is a binding site for substrate; it reads NR. Positions 122, 160, 164, 167, and 195 each coordinate substrate. Residues His195 and His197 each contribute to the Mn(2+) site.

The protein belongs to the LpxH family. The cofactor is Mn(2+).

Its subcellular location is the cell inner membrane. It carries out the reaction UDP-2-N,3-O-bis[(3R)-3-hydroxytetradecanoyl]-alpha-D-glucosamine + H2O = 2-N,3-O-bis[(3R)-3-hydroxytetradecanoyl]-alpha-D-glucosaminyl 1-phosphate + UMP + 2 H(+). Its pathway is glycolipid biosynthesis; lipid IV(A) biosynthesis; lipid IV(A) from (3R)-3-hydroxytetradecanoyl-[acyl-carrier-protein] and UDP-N-acetyl-alpha-D-glucosamine: step 4/6. Its function is as follows. Hydrolyzes the pyrophosphate bond of UDP-2,3-diacylglucosamine to yield 2,3-diacylglucosamine 1-phosphate (lipid X) and UMP by catalyzing the attack of water at the alpha-P atom. Involved in the biosynthesis of lipid A, a phosphorylated glycolipid that anchors the lipopolysaccharide to the outer membrane of the cell. The polypeptide is UDP-2,3-diacylglucosamine hydrolase (Enterobacter sp. (strain 638)).